The chain runs to 252 residues: tRNA (guanine-N(1)-)-methyltransferase (252 aa).

Residues glycine 110 and valine 130 to leucine 135 each bind S-adenosyl-L-methionine.

This sequence belongs to the RNA methyltransferase TrmD family. As to quaternary structure, homodimer.

It localises to the cytoplasm. It catalyses the reaction guanosine(37) in tRNA + S-adenosyl-L-methionine = N(1)-methylguanosine(37) in tRNA + S-adenosyl-L-homocysteine + H(+). In terms of biological role, specifically methylates guanosine-37 in various tRNAs. The sequence is that of tRNA (guanine-N(1)-)-methyltransferase from Magnetococcus marinus (strain ATCC BAA-1437 / JCM 17883 / MC-1).